The sequence spans 651 residues: Mediator of RNA polymerase II transcription subunit 17 (651 aa).

The disordered stretch occupies residues Q51–E83.

The protein belongs to the Mediator complex subunit 17 family. Interacts with GATA1 and PPARG. Component of the Mediator complex, which is composed of MED1, MED4, MED6, MED7, MED8, MED9, MED10, MED11, MED12, MED13, MED13L, MED14, MED15, MED16, MED17, MED18, MED19, MED20, MED21, MED22, MED23, MED24, MED25, MED26, MED27, MED29, MED30, MED31, CCNC, CDK8 and CDC2L6/CDK11. The MED12, MED13, CCNC and CDK8 subunits form a distinct module termed the CDK8 module. Mediator containing the CDK8 module is less active than Mediator lacking this module in supporting transcriptional activation. Individual preparations of the Mediator complex lacking one or more distinct subunits have been variously termed ARC, CRSP, DRIP, PC2, SMCC and TRAP. Interacts with STAT2. As to expression, ubiquitous.

It localises to the nucleus. Functionally, component of the Mediator complex, a coactivator involved in the regulated transcription of nearly all RNA polymerase II-dependent genes. Mediator functions as a bridge to convey information from gene-specific regulatory proteins to the basal RNA polymerase II transcription machinery. Mediator is recruited to promoters by direct interactions with regulatory proteins and serves as a scaffold for the assembly of a functional preinitiation complex with RNA polymerase II and the general transcription factors. The polypeptide is Mediator of RNA polymerase II transcription subunit 17 (MED17) (Homo sapiens (Human)).